The following is a 259-amino-acid chain: Exosome complex component Rrp42 (259 aa).

This sequence belongs to the RNase PH family. Rrp42 subfamily. In terms of assembly, component of the archaeal exosome complex. Forms a hexameric ring-like arrangement composed of 3 Rrp41-Rrp42 heterodimers. The hexameric ring associates with a trimer of Rrp4 and/or Csl4 subunits.

The protein localises to the cytoplasm. Non-catalytic component of the exosome, which is a complex involved in RNA degradation. Contributes to the structuring of the Rrp41 active site. This is Exosome complex component Rrp42 from Archaeoglobus fulgidus (strain ATCC 49558 / DSM 4304 / JCM 9628 / NBRC 100126 / VC-16).